Consider the following 372-residue polypeptide: Non-structural protein NS2 (372 aa).

The tract at residues 259-326 is disordered; sequence NQIEKQHTTH…QESEPESPSF (68 aa). A compositionally biased stretch (low complexity) spans 299–309; that stretch reads TETTSTSSSHH.

The protein is Non-structural protein NS2 (NS) of Aedes albopictus (Asian tiger mosquito).